The chain runs to 255 residues: Undecaprenyl-diphosphatase (255 aa).

Helical transmembrane passes span 1 to 21, 75 to 95, 96 to 116, 174 to 194, 203 to 223, and 234 to 254; these read MDIIQVIVLSIIEGITEFLPI, IIISFIPVGIMGLLFHKIVYQ, LFTVQIVATAFIVGGIIFLIV, TEFSFLGALPVMLAASLFDIV, GDISNLVVGFIVSFFMALITI, and NFVPFGIYRILFGVILLMFFV.

It belongs to the UppP family.

The protein resides in the cell membrane. The catalysed reaction is di-trans,octa-cis-undecaprenyl diphosphate + H2O = di-trans,octa-cis-undecaprenyl phosphate + phosphate + H(+). Its function is as follows. Catalyzes the dephosphorylation of undecaprenyl diphosphate (UPP). This chain is Undecaprenyl-diphosphatase, found in Methanococcus aeolicus (strain ATCC BAA-1280 / DSM 17508 / OCM 812 / Nankai-3).